The primary structure comprises 1196 residues: Chromosome partition protein Smc (1196 aa).

Residue 32–39 participates in ATP binding; the sequence is PNGSGKSN. Coiled-coil stretches lie at residues 168–288 and 327–497; these read LKHR…SVQQ and DALE…LERK. The region spanning 510–621 is the SMC hinge domain; sequence AGILGPMAKL…VDDLDRALAL (112 aa). Coiled coils occupy residues 654 to 829 and 972 to 1026; these read LEVT…RAQQ and DRPT…KDLL.

This sequence belongs to the SMC family. As to quaternary structure, homodimer.

It is found in the cytoplasm. Required for chromosome condensation and partitioning. The protein is Chromosome partition protein Smc of Mycolicibacterium paratuberculosis (strain ATCC BAA-968 / K-10) (Mycobacterium paratuberculosis).